Here is a 1413-residue protein sequence, read N- to C-terminus: Zinc finger protein 609 (1413 aa).

5 disordered regions span residues 1–26 (MSLS…SGDE), 47–196 (QKLE…GRGS), 354–484 (RFCD…EPTL), 517–659 (AHAH…RPIA), and 695–765 (PNSP…AAGD). A phosphoserine mark is found at serine 358, serine 361, and serine 379. Threonine 381 bears the Phosphothreonine mark. Positions 386-405 (AAAASDSKGTSSSSKTRAGA) are enriched in low complexity. Serine 413, serine 433, serine 446, serine 452, serine 467, and serine 470 each carry phosphoserine. Residues 423–437 (ASSTSEDVKASPSSA) are compositionally biased toward polar residues. Lysine 479 is covalently cross-linked (Glycyl lysine isopeptide (Lys-Gly) (interchain with G-Cter in SUMO2)). The segment at 495 to 520 (IDCPHPNCNKKYKHINGLKYHQAHAH) adopts a C2H2-type zinc-finger fold. Positions 519-529 (AHTDDDSKPEA) are enriched in basic and acidic residues. Serine 533, serine 575, and serine 577 each carry phosphoserine. The segment covering 625 to 648 (SLERKCMEKEKCKKPSSLKSEKIP) has biased composition (basic and acidic residues). The segment covering 725-735 (DKKKKDKKKKD) has biased composition (basic residues). Position 742 is a phosphoserine (serine 742). Position 745 is a phosphothreonine (threonine 745). Residues 750-763 (CRAEEGKSPFRDAA) show a composition bias toward basic and acidic residues. Serine 757 is subject to Phosphoserine. Lysine 788 participates in a covalent cross-link: Glycyl lysine isopeptide (Lys-Gly) (interchain with G-Cter in SUMO2). Residues 797-843 (FTDNAPSPSIGGSSRLDSTTPTQPLTPLHVVTQNGAEASSVKTNSPA) are compositionally biased toward polar residues. 4 disordered regions span residues 797–962 (FTDN…VIQQ), 1004–1127 (YEEQ…RQAE), 1154–1221 (IKSE…SPLT), and 1273–1369 (SKVS…STHH). A Phosphoserine modification is found at serine 803. Threonine 822 carries the phosphothreonine modification. Residues serine 841, serine 845, and serine 848 each carry the phosphoserine modification. Residues 854 to 875 (GEGKVDSAKSKDPEQLVKEGAK) show a composition bias toward basic and acidic residues. Polar residues predominate over residues 902–916 (YAQSSPGTLTSSSQA). Basic and acidic residues predominate over residues 925-949 (TKKDEEPESVEGKVKNDVCEEKKPE). Residues 950 to 962 (LSNSSQQPSVIQQ) are compositionally biased toward polar residues. Basic and acidic residues predominate over residues 1022-1044 (GLDKKTEMGLKEREASLKEEWKQ). Residue serine 1057 is modified to Phosphoserine. Lysine 1063 participates in a covalent cross-link: Glycyl lysine isopeptide (Lys-Gly) (interchain with G-Cter in SUMO2). Composition is skewed to basic and acidic residues over residues 1099 to 1115 (LKGK…EASE), 1154 to 1189 (IKSE…KEST), and 1197 to 1210 (PSEE…EPRP). Lysine 1155 is covalently cross-linked (Glycyl lysine isopeptide (Lys-Gly) (interchain with G-Cter in SUMO2)). A compositionally biased stretch (polar residues) spans 1288-1298 (PSVSCKASSES). A Glycyl lysine isopeptide (Lys-Gly) (interchain with G-Cter in SUMO2) cross-link involves residue lysine 1299. Gly residues predominate over residues 1330–1348 (GCGVVGGGGSCGSVAGAGG).

In terms of assembly, interacts (via N-terminus) with NIPBL. Interacts with the multiprotein complex Integrator. Expressed in myoblasts. Expressed in neurons in various brain regions, including striatum, prefrontal cortex, olfactory bulb, midbrain, cerebellum and hippocampus. Expressed in neural stem cells (at protein level). Expressed in thymocytes.

Its subcellular location is the nucleus. Transcription factor, which activates RAG1, and possibly RAG2, transcription. Through the regulation of RAG1/2 expression, may regulate thymocyte maturation. Along with NIPBL and the multiprotein complex Integrator, promotes cortical neuron migration during brain development by regulating the transcription of crucial genes in this process. Preferentially binds promoters containing paused RNA polymerase II. Up-regulates the expression of SEMA3A, NRP1, PLXND1 and GABBR2 genes, among others. Functionally, involved in regulation of myoblast proliferation during myogenesis. The chain is Zinc finger protein 609 (Znf609) from Mus musculus (Mouse).